The sequence spans 177 residues: Probable DNA-directed RNA polymerase subunit delta (177 aa).

The region spanning 14-81 is the HTH HARE-type domain; that stretch reads CSMIEVVHSV…GENRWGLRSW (68 aa). The segment at 93-177 is disordered; that stretch reads PQPKPKKKRK…ETEEEEEEEL (85 aa). Residues 106 to 177 show a composition bias toward acidic residues; that stretch reads DGFDDYIEED…ETEEEEEEEL (72 aa).

This sequence belongs to the RpoE family. RNAP is composed of a core of 2 alpha, a beta and a beta' subunits. The core is associated with a delta subunit and one of several sigma factors.

Functionally, participates in both the initiation and recycling phases of transcription. In the presence of the delta subunit, RNAP displays an increased specificity of transcription, a decreased affinity for nucleic acids, and an increased efficiency of RNA synthesis because of enhanced recycling. The polypeptide is Probable DNA-directed RNA polymerase subunit delta (Bacillus cereus (strain AH187)).